The sequence spans 660 residues: uncharacterized protein (660 aa).

The interval 220-239 (ADARGQAAAPPQAQAPAPPD) is disordered. Over residues 222-239 (ARGQAAAPPQAQAPAPPD) the composition is skewed to low complexity.

This is an uncharacterized protein from Callospermophilus lateralis (Golden-mantled ground squirrel).